The chain runs to 632 residues: Putative ferric transport system permease protein FbpB 1 (632 aa).

15 consecutive transmembrane segments (helical) span residues 5 to 25 (SFNL…LPLL), 37 to 57 (LFLT…YKIS), 58 to 78 (MGYS…LSLA), 93 to 113 (LLCI…AIFV), 144 to 164 (LFLS…FALY), 178 to 198 (IFSI…VTLM), 223 to 243 (GFNG…FMIL), 270 to 290 (YQII…IVFI), 299 to 319 (PLVL…YIAG), 330 to 350 (LGSM…IWIG), 377 to 397 (IIGM…SIFY), 436 to 456 (IYAG…AYIV), 469 to 489 (FLTM…YILA), 490 to 510 (FNNA…SMVM), and 547 to 567 (CFIV…TSFV). Residues 140–345 (ITNSLFLSGF…IFSLAIFIIQ (206 aa)) form the ABC transmembrane type-1 1 domain. In terms of domain architecture, ABC transmembrane type-1 2 spans 431-632 (LINTLIYAGI…DCRRYAYFPF (202 aa)).

Belongs to the binding-protein-dependent transport system permease family. FbpB subfamily. As to quaternary structure, the complex is composed of two ATP-binding proteins (FbpC), two transmembrane proteins (FbpB) and a solute-binding protein (FbpA).

Its subcellular location is the cell inner membrane. In terms of biological role, part of the ABC transporter complex FbpABC (TC 3.A.1.10.1) involved in Fe(3+) ions import. Probably responsible for the translocation of the substrate across the membrane. The chain is Putative ferric transport system permease protein FbpB 1 (fbpB1) from Haemophilus influenzae (strain ATCC 51907 / DSM 11121 / KW20 / Rd).